Reading from the N-terminus, the 605-residue chain is UvrABC system protein C (605 aa).

Residues 13–92 form the GIY-YIG domain; the sequence is SEPGVYLMKD…IKRYRPKYNV (80 aa). The region spanning 205-240 is the UVR domain; it reads EKLMELLKEKMNESSMNFRFEEAAVYRDKIKSLEEM.

This sequence belongs to the UvrC family. As to quaternary structure, interacts with UvrB in an incision complex.

It localises to the cytoplasm. Functionally, the UvrABC repair system catalyzes the recognition and processing of DNA lesions. UvrC both incises the 5' and 3' sides of the lesion. The N-terminal half is responsible for the 3' incision and the C-terminal half is responsible for the 5' incision. This Clostridioides difficile (strain 630) (Peptoclostridium difficile) protein is UvrABC system protein C.